We begin with the raw amino-acid sequence, 443 residues long: Protein king tubby (443 aa).

Disordered regions lie at residues 57 to 80 (TNGSPGGINSVAMNTSRNHSNNMR) and 98 to 191 (HELE…EGDV). Residues 67–80 (VAMNTSRNHSNNMR) show a composition bias toward polar residues. Residues 113–128 (QQQQSASHSANSTQSQ) show a composition bias toward low complexity. S136 carries the phosphoserine modification. Residues 177 to 186 (NGTGNGTGGE) show a composition bias toward gly residues.

Belongs to the TUB family.

The protein resides in the cytoplasm. The protein localises to the nucleus. Its subcellular location is the cell projection. It localises to the cilium membrane. It is found in the rhabdomere. This chain is Protein king tubby, found in Drosophila sechellia (Fruit fly).